Reading from the N-terminus, the 647-residue chain is S-adenosyl-L-methionine-dependent tRNA 4-demethylwyosine synthase (647 aa).

Positions 50–198 (GKIFFISQTG…AFQDWCDGVI (149 aa)) constitute a Flavodoxin-like domain. FMN-binding positions include 56–60 (SQTGT) and 142–174 (VFGV…LEMI). Residues 316–559 (YGIESHRCME…LSLKSNGEYE (244 aa)) form the Radical SAM core domain. Residues C332, C336, and C339 each coordinate [4Fe-4S] cluster.

The protein belongs to the TYW1 family. The cofactor is [4Fe-4S] cluster.

The catalysed reaction is N(1)-methylguanosine(37) in tRNA(Phe) + pyruvate + S-adenosyl-L-methionine = 4-demethylwyosine(37) in tRNA(Phe) + 5'-deoxyadenosine + L-methionine + CO2 + H2O. It functions in the pathway tRNA modification; wybutosine-tRNA(Phe) biosynthesis. In terms of biological role, probable component of the wybutosine biosynthesis pathway. Wybutosine is a hyper modified guanosine with a tricyclic base found at the 3'-position adjacent to the anticodon of eukaryotic phenylalanine tRNA. Catalyzes the condensation of N-methylguanine with 2 carbon atoms from pyruvate to form the tricyclic 4-demethylwyosine, an intermediate in wybutosine biosynthesis. The protein is S-adenosyl-L-methionine-dependent tRNA 4-demethylwyosine synthase (TYW1) of Arabidopsis thaliana (Mouse-ear cress).